The chain runs to 256 residues: 3-dehydroquinate dehydratase (256 aa).

Residues 46-48 (EWR) and R82 each bind 3-dehydroquinate. H144 serves as the catalytic Proton donor/acceptor. K171 (schiff-base intermediate with substrate) is an active-site residue. 3-dehydroquinate-binding residues include R213, S232, and Q236.

This sequence belongs to the type-I 3-dehydroquinase family. Homodimer.

It catalyses the reaction 3-dehydroquinate = 3-dehydroshikimate + H2O. Its pathway is metabolic intermediate biosynthesis; chorismate biosynthesis; chorismate from D-erythrose 4-phosphate and phosphoenolpyruvate: step 3/7. Its function is as follows. Involved in the third step of the chorismate pathway, which leads to the biosynthesis of aromatic amino acids. Catalyzes the cis-dehydration of 3-dehydroquinate (DHQ) and introduces the first double bond of the aromatic ring to yield 3-dehydroshikimate. The protein is 3-dehydroquinate dehydratase of Shouchella clausii (strain KSM-K16) (Alkalihalobacillus clausii).